The sequence spans 517 residues: General transcription factor IIF subunit 1 (517 aa).

Residue alanine 2 is modified to N-acetylalanine. Threonine 156 is subject to Phosphothreonine. The segment at 178 to 466 (QQRRLKDQDQ…DAVRRYLTRK (289 aa)) is disordered. 4 positions are modified to phosphoserine: serine 217, serine 218, serine 221, and serine 224. Over residues 232–251 (PKAKKKAPLAKGGRKKKKKK) the composition is skewed to basic residues. Acidic residues-rich tracts occupy residues 255–270 (DEAF…EGQE) and 303–325 (EQSD…EEEE). Threonine 331 is subject to Phosphothreonine. The segment covering 343 to 355 (EESDSSEESDIDS) has biased composition (acidic residues). Over residues 364–374 (AKKKTPPKRER) the composition is skewed to basic residues. Phosphoserine occurs at positions 377, 380, 381, and 385. Residues 377 to 391 (SGGSSRGNSRPGTPS) show a composition bias toward low complexity. Residue threonine 389 is modified to Phosphothreonine. Position 391 is a phosphoserine (serine 391). Residue lysine 407 is modified to N6-acetyllysine. The span at 428–452 (GPQSLSGKSTPQPPSGKTTPNSGDV) shows a compositional bias: polar residues. Residues serine 431, serine 433, and serine 436 each carry the phosphoserine modification. 2 positions are modified to phosphothreonine: threonine 437 and threonine 446. Residue serine 449 is modified to Phosphoserine. Residues glutamate 503, histidine 512, and glutamate 517 each coordinate Zn(2+).

This sequence belongs to the TFIIF alpha subunit family. As to quaternary structure, heterodimer of an alpha and a beta subunit. Interacts with GTF2F2, CTDP1, TAF6/TAFII80 and URI1. Interacts with GTF2B (via C-terminus and preferentially via acetylated form); this interaction prevents binding of GTF2B to GTF2F2. Part of TBP-based Pol II pre-initiation complex (PIC), in which Pol II core assembles with general transcription factors and other specific initiation factors including GTF2E1, GTF2E2, GTF2F1, GTF2F2, TCEA1, ERCC2, ERCC3, GTF2H2, GTF2H3, GTF2H4, GTF2H5, GTF2A1, GTF2A2, GTF2B and TBP; this large multi-subunit PIC complex mediates DNA unwinding and targets Pol II core to the transcription start site where the first phosphodiester bond forms. Phosphorylated on Ser and other residues by TAF1 and casein kinase II-like kinases.

It localises to the nucleus. In terms of biological role, TFIIF is a general transcription initiation factor that binds to RNA polymerase II and helps to recruit it to the initiation complex in collaboration with TFIIB. It promotes transcription elongation. The protein is General transcription factor IIF subunit 1 (GTF2F1) of Homo sapiens (Human).